We begin with the raw amino-acid sequence, 739 residues long: Phosphoribosylformylglycinamidine synthase subunit PurL (739 aa).

Residue H54 is part of the active site. Residues Y57 and K96 each contribute to the ATP site. E98 contributes to the Mg(2+) binding site. Substrate is bound by residues 99–102 (SHNH) and R121. H100 acts as the Proton acceptor in catalysis. Position 122 (D122) interacts with Mg(2+). Q245 is a substrate binding site. A Mg(2+)-binding site is contributed by D273. 317 to 319 (ESQ) provides a ligand contact to substrate. ATP-binding residues include D500 and G537. N538 serves as a coordination point for Mg(2+). Residue S540 coordinates substrate.

This sequence belongs to the FGAMS family. As to quaternary structure, monomer. Part of the FGAM synthase complex composed of 1 PurL, 1 PurQ and 2 PurS subunits.

The protein resides in the cytoplasm. It carries out the reaction N(2)-formyl-N(1)-(5-phospho-beta-D-ribosyl)glycinamide + L-glutamine + ATP + H2O = 2-formamido-N(1)-(5-O-phospho-beta-D-ribosyl)acetamidine + L-glutamate + ADP + phosphate + H(+). It functions in the pathway purine metabolism; IMP biosynthesis via de novo pathway; 5-amino-1-(5-phospho-D-ribosyl)imidazole from N(2)-formyl-N(1)-(5-phospho-D-ribosyl)glycinamide: step 1/2. Functionally, part of the phosphoribosylformylglycinamidine synthase complex involved in the purines biosynthetic pathway. Catalyzes the ATP-dependent conversion of formylglycinamide ribonucleotide (FGAR) and glutamine to yield formylglycinamidine ribonucleotide (FGAM) and glutamate. The FGAM synthase complex is composed of three subunits. PurQ produces an ammonia molecule by converting glutamine to glutamate. PurL transfers the ammonia molecule to FGAR to form FGAM in an ATP-dependent manner. PurS interacts with PurQ and PurL and is thought to assist in the transfer of the ammonia molecule from PurQ to PurL. This Bacillus cereus (strain AH187) protein is Phosphoribosylformylglycinamidine synthase subunit PurL.